A 382-amino-acid chain; its full sequence is Dual-specificity RNA methyltransferase RlmN (382 aa).

The Proton acceptor role is filled by glutamate 96. The 241-residue stretch at 102-342 (QGKRGTLCVS…VRTTRGEDID (241 aa)) folds into the Radical SAM core domain. The cysteines at positions 109 and 345 are disulfide-linked. 3 residues coordinate [4Fe-4S] cluster: cysteine 116, cysteine 120, and cysteine 123. S-adenosyl-L-methionine is bound by residues 170 to 171 (GE), serine 202, 224 to 226 (SLH), and asparagine 302. Cysteine 345 (S-methylcysteine intermediate) is an active-site residue.

It belongs to the radical SAM superfamily. RlmN family. Requires [4Fe-4S] cluster as cofactor.

It localises to the cytoplasm. The enzyme catalyses adenosine(2503) in 23S rRNA + 2 reduced [2Fe-2S]-[ferredoxin] + 2 S-adenosyl-L-methionine = 2-methyladenosine(2503) in 23S rRNA + 5'-deoxyadenosine + L-methionine + 2 oxidized [2Fe-2S]-[ferredoxin] + S-adenosyl-L-homocysteine. It carries out the reaction adenosine(37) in tRNA + 2 reduced [2Fe-2S]-[ferredoxin] + 2 S-adenosyl-L-methionine = 2-methyladenosine(37) in tRNA + 5'-deoxyadenosine + L-methionine + 2 oxidized [2Fe-2S]-[ferredoxin] + S-adenosyl-L-homocysteine. Its function is as follows. Specifically methylates position 2 of adenine 2503 in 23S rRNA and position 2 of adenine 37 in tRNAs. m2A2503 modification seems to play a crucial role in the proofreading step occurring at the peptidyl transferase center and thus would serve to optimize ribosomal fidelity. The polypeptide is Dual-specificity RNA methyltransferase RlmN (Pseudomonas savastanoi pv. phaseolicola (strain 1448A / Race 6) (Pseudomonas syringae pv. phaseolicola (strain 1448A / Race 6))).